The following is a 401-amino-acid chain: Putative hetero-Diels-Alderase asR5 (401 aa).

An N-terminal signal peptide occupies residues 1 to 21 (MRRSFLISAALGLSMSTPALA). N-linked (GlcNAc...) asparagine glycans are attached at residues Asn71, Asn77, Asn240, and Asn334.

The protein belongs to the eupF Diels-Alderase family.

It participates in secondary metabolite biosynthesis; terpenoid biosynthesis. In terms of biological role, putative hetero-Diels-Alderase; part of the gene cluster that mediates the biosynthesis of xenovulene A, an unusual meroterpenoid that has potent inhibitory effects on the human gamma-aminobutyrate A (GABAA) benzodiazepine receptor. The first step of xenovulene A biosynthesis is the biosynthesis of 3-methylorcinaldehyde performed by the non-reducing polyketide synthase aspks1. The salicylate hydroxylase asL1 then catalyzes the oxidative dearomatization of 3-methylorcinaldehyde to yield a dearomatized hydroxycyclohexadione. The 2-oxoglutarate-dependent dioxygenase asL3 further catalyzes the oxidative ring expansion to provide the first tropolone metabolite. The cytochrome P450 monooxygenase asR2 allows the synthesis of tropolone hemiacetal. In parallel, a previously unrecognised class of terpene cyclase, asR6, produces alpha-humulene from farnesylpyrophosphate (FPP). The putative Diels-Alderase asR5 probably catalyzes the formation of the tropolone-humulene skeleton by linking humulene and the polyketide moiety. Oxidative-ring contractions catalyzed by asL4 and asL6 then processively remove carbon atoms from the polyketide to yield xenovulene A. This chain is Putative hetero-Diels-Alderase asR5, found in Sarocladium schorii (Acremonium strictum (strain IMI 501407)).